We begin with the raw amino-acid sequence, 384 residues long: GTPase Obg (384 aa).

Residues 1–159 form the Obg domain; sequence MKFVDEVEIR…RPLKLELMLL (159 aa). The interval 72–94 is disordered; the sequence is NGMGKNCTGRRGNDIVLPVPPGT. In terms of domain architecture, OBG-type G spans 160-333; the sequence is ADVGLLGMPN…LCREVMSYLE (174 aa). GTP-binding positions include 166–173, 191–195, 213–216, 283–286, and 314–316; these read GMPNAGKS, FTTLI, DIPG, NKVD, and AAL. Mg(2+) contacts are provided by S173 and T193. Residues 358–384 form a disordered region; the sequence is EEVLEEEMDDEDDDDDDDHDVEVIYQK. Acidic residues predominate over residues 360–377; the sequence is VLEEEMDDEDDDDDDDHD.

The protein belongs to the TRAFAC class OBG-HflX-like GTPase superfamily. OBG GTPase family. As to quaternary structure, monomer. The cofactor is Mg(2+).

The protein localises to the cytoplasm. An essential GTPase which binds GTP, GDP and possibly (p)ppGpp with moderate affinity, with high nucleotide exchange rates and a fairly low GTP hydrolysis rate. Plays a role in control of the cell cycle, stress response, ribosome biogenesis and in those bacteria that undergo differentiation, in morphogenesis control. In Idiomarina loihiensis (strain ATCC BAA-735 / DSM 15497 / L2-TR), this protein is GTPase Obg.